Consider the following 148-residue polypeptide: Small ribosomal subunit protein bS6 (148 aa).

The disordered stretch occupies residues 96-148 (HEEGQSAMLTRRDDRRERDGDDRPRRREGGFDRGDRGDRGPRRPRDNEAGEGA).

Belongs to the bacterial ribosomal protein bS6 family.

Its function is as follows. Binds together with bS18 to 16S ribosomal RNA. The chain is Small ribosomal subunit protein bS6 from Brucella melitensis biotype 1 (strain ATCC 23456 / CCUG 17765 / NCTC 10094 / 16M).